The sequence spans 224 residues: Germin-like protein 8-5 (224 aa).

A signal peptide spans 1–22 (MASPSSLCLLAALALISWQAMA). C32 and C47 are joined by a disulfide. The 151-residue stretch at 62 to 212 (AKLDTPRKTN…AFQVEKGTID (151 aa)) folds into the Cupin type-1 domain. N-linked (GlcNAc...) asparagine glycosylation occurs at N76. Positions 109, 111, and 116 each coordinate Mn(2+). The N-linked (GlcNAc...) asparagine glycan is linked to N135. H157 provides a ligand contact to Mn(2+).

This sequence belongs to the germin family. As to quaternary structure, oligomer (believed to be a pentamer but probably hexamer).

It is found in the secreted. The protein localises to the extracellular space. Its subcellular location is the apoplast. Functionally, plays a role in broad-spectrum disease resistance. Probably has no oxalate oxidase activity even if the active site is conserved. The chain is Germin-like protein 8-5 from Oryza sativa subsp. japonica (Rice).